We begin with the raw amino-acid sequence, 1572 residues long: E3 ubiquitin-protein ligase HECW2 (1572 aa).

A Phosphoserine modification is found at S48. The region spanning 167 to 301 (GAEGMEGGAS…QAIGDQMLSY (135 aa)) is the C2 domain. Disordered regions lie at residues 341–452 (VNSV…SSFP) and 489–796 (IMFS…PSVR). Low complexity predominate over residues 400–410 (TSTSSRTSPPR). The span at 518–532 (ASTHEAASFEDKPEN) shows a compositional bias: basic and acidic residues. Composition is skewed to polar residues over residues 572-588 (EVDQ…SDAS), 597-614 (ETES…SSET), 643-664 (SSCN…SSLE), and 688-703 (PTSS…SVCT). The tract at residues 737-1068 (WQRRGSLEGA…PRPSSTFNTV (332 aa)) is interaction with TP73. Positions 744 to 776 (EGAAAAAESPPQEEGSAGEAQGTCEGATAQEEG) are enriched in low complexity. The WW 1 domain maps to 807–840 (EALPPNWEARIDSHGRIFYVDHVNRTTTWQRPTA). Residues 847–874 (LQRSNSIQQMEQLNRRYQSIRRTMTNER) adopt a coiled-coil conformation. Residues S852 and S909 each carry the phosphoserine modification. A WW 2 domain is found at 985–1018 (LELPRGWEMKHDHQGKAFFVDHNSRTTTFIDPRL). Disordered stretches follow at residues 1024–1069 (RPTS…NTVS) and 1161–1187 (CQSP…RAPA). Residues 1031-1040 (HRQHLTRQRS) are compositionally biased toward basic residues. Positions 1161-1181 (CQSPRGSPVSSPQNSPGTQRA) are enriched in polar residues. At S1175 the chain carries Phosphoserine. An HECT domain is found at 1237–1572 (SRKDLQRNKL…VEETSTFGLE (336 aa)). The active-site Glycyl thioester intermediate is C1540.

In terms of assembly, interacts with TP73. Interacts with FZR1. In terms of processing, ubiquitinated and degraded during mitotic exit by APC/C-Cdh1. In terms of tissue distribution, predominantly expressed in adult brain, lung and heart.

The protein resides in the cytoplasm. It is found in the cytoskeleton. It localises to the spindle. The catalysed reaction is S-ubiquitinyl-[E2 ubiquitin-conjugating enzyme]-L-cysteine + [acceptor protein]-L-lysine = [E2 ubiquitin-conjugating enzyme]-L-cysteine + N(6)-ubiquitinyl-[acceptor protein]-L-lysine.. The protein operates within protein modification; protein ubiquitination. E3 ubiquitin-protein ligase that mediates ubiquitination of TP73. Acts to stabilize TP73 and enhance activation of transcription by TP73. Involved in the regulation of mitotic metaphase/anaphase transition. In Homo sapiens (Human), this protein is E3 ubiquitin-protein ligase HECW2 (HECW2).